The primary structure comprises 369 residues: tRNA(Met) cytidine acetate ligase (369 aa).

ATP contacts are provided by residues 7-20 (VAEFNPFHNGHKYL), Gly-96, Asn-152, and Arg-175.

It belongs to the TmcAL family.

It is found in the cytoplasm. The enzyme catalyses cytidine(34) in elongator tRNA(Met) + acetate + ATP = N(4)-acetylcytidine(34) in elongator tRNA(Met) + AMP + diphosphate. Its function is as follows. Catalyzes the formation of N(4)-acetylcytidine (ac(4)C) at the wobble position of elongator tRNA(Met), using acetate and ATP as substrates. First activates an acetate ion to form acetyladenylate (Ac-AMP) and then transfers the acetyl group to tRNA to form ac(4)C34. The sequence is that of tRNA(Met) cytidine acetate ligase from Streptococcus agalactiae serotype Ia (strain ATCC 27591 / A909 / CDC SS700).